A 364-amino-acid polypeptide reads, in one-letter code: GTPase Obg (364 aa).

The Obg domain maps to 1–161 (MRFVDEVTIS…KYLRLELKIL (161 aa)). One can recognise an OBG-type G domain in the interval 162 to 334 (ADAGIIGLPN…LVDAIWKLQS (173 aa)). GTP is bound by residues 168–175 (GLPNAGKS), 193–197 (FTTLN), 217–220 (DIPG), 287–290 (NKID), and 315–317 (SAE). 2 residues coordinate Mg(2+): serine 175 and threonine 195.

The protein belongs to the TRAFAC class OBG-HflX-like GTPase superfamily. OBG GTPase family. As to quaternary structure, monomer. Mg(2+) is required as a cofactor.

The protein localises to the cytoplasm. An essential GTPase which binds GTP, GDP and possibly (p)ppGpp with moderate affinity, with high nucleotide exchange rates and a fairly low GTP hydrolysis rate. Plays a role in control of the cell cycle, stress response, ribosome biogenesis and in those bacteria that undergo differentiation, in morphogenesis control. The protein is GTPase Obg of Lawsonia intracellularis (strain PHE/MN1-00).